We begin with the raw amino-acid sequence, 454 residues long: Glutamyl-tRNA reductase (454 aa).

Substrate is bound by residues 50-53 (TCNR), S103, 108-110 (EDQ), and Q114. The active-site Nucleophile is the C51. 182-187 (GAGEMG) provides a ligand contact to NADP(+). The disordered stretch occupies residues 407–454 (LFDPNFGGDTPQPDRPDDIPRAAERGDISGDDLPDDVPNHIAEKVSDG). Composition is skewed to basic and acidic residues over residues 418 to 434 (QPDR…RGDI) and 443 to 454 (VPNHIAEKVSDG).

This sequence belongs to the glutamyl-tRNA reductase family. As to quaternary structure, homodimer.

It catalyses the reaction (S)-4-amino-5-oxopentanoate + tRNA(Glu) + NADP(+) = L-glutamyl-tRNA(Glu) + NADPH + H(+). The protein operates within porphyrin-containing compound metabolism; protoporphyrin-IX biosynthesis; 5-aminolevulinate from L-glutamyl-tRNA(Glu): step 1/2. Functionally, catalyzes the NADPH-dependent reduction of glutamyl-tRNA(Glu) to glutamate 1-semialdehyde (GSA). The sequence is that of Glutamyl-tRNA reductase from Haloquadratum walsbyi (strain DSM 16790 / HBSQ001).